We begin with the raw amino-acid sequence, 426 residues long: Enolase (426 aa).

Q163 contacts (2R)-2-phosphoglycerate. E205 (proton donor) is an active-site residue. Mg(2+) is bound by residues D242, E285, and D312. (2R)-2-phosphoglycerate is bound by residues K337, R366, S367, and K388. K337 (proton acceptor) is an active-site residue.

This sequence belongs to the enolase family. Component of the RNA degradosome, a multiprotein complex involved in RNA processing and mRNA degradation. It depends on Mg(2+) as a cofactor.

It is found in the cytoplasm. Its subcellular location is the secreted. The protein localises to the cell surface. The catalysed reaction is (2R)-2-phosphoglycerate = phosphoenolpyruvate + H2O. The protein operates within carbohydrate degradation; glycolysis; pyruvate from D-glyceraldehyde 3-phosphate: step 4/5. In terms of biological role, catalyzes the reversible conversion of 2-phosphoglycerate (2-PG) into phosphoenolpyruvate (PEP). It is essential for the degradation of carbohydrates via glycolysis. The polypeptide is Enolase (Nitrosococcus oceani (strain ATCC 19707 / BCRC 17464 / JCM 30415 / NCIMB 11848 / C-107)).